The chain runs to 207 residues: Cytochrome c biogenesis ATP-binding export protein CcmA (207 aa).

The region spanning Leu6–Ser207 is the ABC transporter domain. An ATP-binding site is contributed by Gly38–Thr45.

The protein belongs to the ABC transporter superfamily. CcmA exporter (TC 3.A.1.107) family. In terms of assembly, the complex is composed of two ATP-binding proteins (CcmA) and two transmembrane proteins (CcmB).

The protein localises to the cell inner membrane. It catalyses the reaction heme b(in) + ATP + H2O = heme b(out) + ADP + phosphate + H(+). Part of the ABC transporter complex CcmAB involved in the biogenesis of c-type cytochromes; once thought to export heme, this seems not to be the case, but its exact role is uncertain. Responsible for energy coupling to the transport system. This is Cytochrome c biogenesis ATP-binding export protein CcmA from Methylococcus capsulatus (strain ATCC 33009 / NCIMB 11132 / Bath).